The chain runs to 141 residues: Large ribosomal subunit protein uL11c (141 aa).

The protein belongs to the universal ribosomal protein uL11 family. In terms of assembly, part of the ribosomal stalk of the 50S ribosomal subunit. Interacts with L10 and the large rRNA to form the base of the stalk. L10 forms an elongated spine to which L12 dimers bind in a sequential fashion forming a multimeric L10(L12)X complex.

It is found in the plastid. Its subcellular location is the chloroplast. Its function is as follows. Forms part of the ribosomal stalk which helps the ribosome interact with GTP-bound translation factors. The polypeptide is Large ribosomal subunit protein uL11c (Guillardia theta (Cryptophyte)).